A 196-amino-acid chain; its full sequence is CRISPR-associated exonuclease Cas4 (196 aa).

A [4Fe-4S] cluster-binding site is contributed by Cys-23. 3 residues coordinate Mn(2+): His-50, Asp-90, and Glu-103. The [4Fe-4S] cluster site is built by Cys-184, Cys-187, and Cys-193.

It belongs to the CRISPR-associated exonuclease Cas4 family. Mg(2+) is required as a cofactor. It depends on [4Fe-4S] cluster as a cofactor.

It catalyses the reaction exonucleolytic cleavage in the 5'- to 3'-direction to yield nucleoside 3'-phosphates.. Functionally, CRISPR (clustered regularly interspaced short palindromic repeat) is an adaptive immune system that provides protection against mobile genetic elements (viruses, transposable elements and conjugative plasmids). CRISPR clusters contain sequences complementary to antecedent mobile elements and target invading nucleic acids. CRISPR clusters are transcribed and processed into CRISPR RNA (crRNA). This may be a 5' to 3' ssDNA exonuclease. In Francisella tularensis subsp. novicida (strain U112), this protein is CRISPR-associated exonuclease Cas4.